We begin with the raw amino-acid sequence, 500 residues long: Abscisic acid 8'-hydroxylase 3 (500 aa).

Residues 3-23 form a helical membrane-spanning segment; sequence ASFVIVIVISFFISLAFMCYV. Cysteine 426 is a binding site for heme.

The protein belongs to the cytochrome P450 family. Requires heme as cofactor.

The protein resides in the membrane. The enzyme catalyses 2-cis-(+)-abscisate + reduced [NADPH--hemoprotein reductase] + O2 = (+)-8'-hydroxyabscisate + oxidized [NADPH--hemoprotein reductase] + H2O + H(+). Its pathway is plant hormone degradation; abscisic acid degradation. In terms of biological role, involved in the oxidative degradation of abscisic acid. This is Abscisic acid 8'-hydroxylase 3 (CYP707A7) from Oryza sativa subsp. indica (Rice).